We begin with the raw amino-acid sequence, 133 residues long: Hydrogenase maturation factor HypA (133 aa).

Residue His2 coordinates Ni(2+). Positions 73, 75, 105, and 108 each coordinate Zn(2+).

Belongs to the HypA/HybF family.

In terms of biological role, involved in the maturation of [NiFe] hydrogenases. Required for nickel insertion into the metal center of the hydrogenase. The protein is Hydrogenase maturation factor HypA of Methanosarcina acetivorans (strain ATCC 35395 / DSM 2834 / JCM 12185 / C2A).